The chain runs to 1877 residues: Transmembrane protein 131 (1877 aa).

Positions methionine 1–alanine 20 are cleaved as a signal peptide. Residues alanine 21–glutamate 1115 are Lumenal-facing. Residues arginine 107–phenylalanine 281 are papD-L domain. A helical transmembrane segment spans residues leucine 1116–threonine 1136. Residues alanine 1137 to asparagine 1877 are Cytoplasmic-facing. Over residues asparagine 1197–aspartate 1227 the composition is skewed to polar residues. Disordered stretches follow at residues asparagine 1197 to threonine 1573, leucine 1590 to phenylalanine 1655, serine 1679 to serine 1707, and asparagine 1830 to proline 1852. The segment covering threonine 1233 to proline 1258 has biased composition (low complexity). The segment covering glutamine 1301 to glutamate 1311 has biased composition (pro residues). Residues serine 1318 and serine 1338 each carry the phosphoserine modification. Basic and acidic residues-rich tracts occupy residues serine 1326–glutamate 1339 and alanine 1349–serine 1360. Serine 1371 bears the Phosphoserine mark. A compositionally biased stretch (basic residues) spans serine 1376–proline 1391. Residues lysine 1392–leucine 1414 show a composition bias toward basic and acidic residues. The span at serine 1420 to glutamate 1432 shows a compositional bias: low complexity. Polar residues-rich tracts occupy residues threonine 1507–threonine 1523 and leucine 1538–serine 1550. The segment covering proline 1599–proline 1608 has biased composition (pro residues). The span at cysteine 1609 to leucine 1646 shows a compositional bias: low complexity. The span at asparagine 1830–alanine 1839 shows a compositional bias: polar residues. 2 positions are modified to phosphoserine: serine 1857 and serine 1865.

The protein belongs to the TMEM131 family. Interacts (via PapD-L domain) with COL1A2 (via C-terminus); the interaction is direct, may occur with other collagen proteins, and is involved in assembly and TRAPPIII ER-to-Golgi transport complex-dependent secretion of collagen. Interacts (via C-terminus) with TRAPPC8 (via C-terminus); the interaction is direct.

The protein localises to the membrane. In terms of biological role, collagen binding transmembrane protein involved in collagen secretion by recruiting the ER-to-Golgi transport complex TRAPPIII. May play a role in the immune response to viral infection. The chain is Transmembrane protein 131 from Mus musculus (Mouse).